We begin with the raw amino-acid sequence, 286 residues long: 4-hydroxy-tetrahydrodipicolinate synthase 2 (286 aa).

Pyruvate is bound at residue threonine 45. Tyrosine 133 functions as the Proton donor/acceptor in the catalytic mechanism. Lysine 161 (schiff-base intermediate with substrate) is an active-site residue. Isoleucine 203 is a binding site for pyruvate.

It belongs to the DapA family. Homotetramer; dimer of dimers.

Its subcellular location is the cytoplasm. The enzyme catalyses L-aspartate 4-semialdehyde + pyruvate = (2S,4S)-4-hydroxy-2,3,4,5-tetrahydrodipicolinate + H2O + H(+). It participates in amino-acid biosynthesis; L-lysine biosynthesis via DAP pathway; (S)-tetrahydrodipicolinate from L-aspartate: step 3/4. Its function is as follows. Catalyzes the condensation of (S)-aspartate-beta-semialdehyde [(S)-ASA] and pyruvate to 4-hydroxy-tetrahydrodipicolinate (HTPA). The polypeptide is 4-hydroxy-tetrahydrodipicolinate synthase 2 (Clostridium acetobutylicum (strain ATCC 824 / DSM 792 / JCM 1419 / IAM 19013 / LMG 5710 / NBRC 13948 / NRRL B-527 / VKM B-1787 / 2291 / W)).